We begin with the raw amino-acid sequence, 239 residues long: Probable transcriptional regulatory protein Aave_3203 (239 aa).

The segment at 1–20 (MAGHSKWANIQHRKGRQDEK) is disordered.

The protein belongs to the TACO1 family.

Its subcellular location is the cytoplasm. This Paracidovorax citrulli (strain AAC00-1) (Acidovorax citrulli) protein is Probable transcriptional regulatory protein Aave_3203.